Reading from the N-terminus, the 851-residue chain is MSSDQTPQNRNRGGDDSYNPRLQQQTSQIPSTGPDQGQQRERSQEQESDHEHQQAQQHLHQFQQSNLTPSTTAFPSSTSIPTFSKQDQGYHNQFSSPQSSYRKIGNFAQSSNAPFLNEPHPIYATNYQQNVPSQSQFQFDYSSPYIGQSQSQSQSQSQAQPQPHPQPQTYQQLPHYSQASVSSLPPTYQAFHSMHEASSADNDSATNITTPQKRKKQKRSESVTPNTGENELKQLALRSSNIPLSELAQKVKQLENDSTTTSVSLEQSKMKENKETQRQLFGMVWLLNSCDLAPTAVIPRNRIYARYVQVCADNNLAPVSPASFGKLVKILYPNITTRRLGMRGQSKYHYCGIKLTGDENMQSQLLNYQQKQKHQSQEQYNQQAQVGSSTSSAGLAGHQSPMSSCNSSVSYEESPGPIISRAHTPSFSPINTPTISMSKSLNDQLPSISHMKFIPNLFYLLNSNVATSSNPHEPIQLPSIYPYLSKDADHDIADTLYSLYKVHVNSIFEALRYMQLKKLFSSFSTFNNILTAPVLKLYTTESLAEWVMKCDLIMYKKMIRMLSKLQLQLLIPQEQLLQLKQIADGYIKTLSTSLINSKVSQNFVMMKLKLAKHFVNLLNRLIKVIETGQPASRILNDDNEKNTMTQDWMKLDIHGIICREMPCNDNNIDTLTYILTGEVVNLIKVKSDNEQAPTMSDFANYISNLPSRFPEVNTRLFLLLASNLLTTCLREISLSGGEGFGAWWIVRCWIDEYLAWSFEVGGFFQDDLQEIVAQQQLNVQLPPPSLSSLPQTQQQNPVIQEETGTQEESLGNIDLLETSFDFDAKTSQPYQQPSHTESLLNFETNIDNLLN.

2 stretches are compositionally biased toward polar residues: residues 1–11 and 20–34; these read MSSDQTPQNRN and PRLQ…STGP. 3 disordered regions span residues 1–121, 134–170, and 195–230; these read MSSD…EPHP, QSQF…PQTY, and HEAS…TGEN. Basic and acidic residues predominate over residues 38–53; the sequence is QQRERSQEQESDHEHQ. Residues 54–84 show a composition bias toward low complexity; the sequence is QAQQHLHQFQQSNLTPSTTAFPSSTSIPTFS. The span at 85–114 shows a compositional bias: polar residues; the sequence is KQDQGYHNQFSSPQSSYRKIGNFAQSSNAP. A compositionally biased stretch (low complexity) spans 141–170; it reads YSSPYIGQSQSQSQSQSQAQPQPHPQPQTY. The segment covering 199 to 211 has biased composition (polar residues); the sequence is SADNDSATNITTP. Positions 282–357 form a DNA-binding region, RFX-type winged-helix; that stretch reads GMVWLLNSCD…YHYCGIKLTG (76 aa). 2 disordered regions span residues 368–411 and 783–806; these read YQQK…SVSY and PPSL…TGTQ. Positions 384 to 393 are enriched in polar residues; it reads AQVGSSTSSA. Over residues 783–797 the composition is skewed to low complexity; it reads PPSLSSLPQTQQQNP.

The protein belongs to the RFX family.

It is found in the nucleus. In terms of biological role, transcription factor involved in DNA damage responses, morphogenesis, and virulence. In Candida albicans (strain SC5314 / ATCC MYA-2876) (Yeast), this protein is Transcriptional regulator RFX1 (RFX1).